We begin with the raw amino-acid sequence, 142 residues long: Phosphoribosyl-AMP cyclohydrolase (142 aa).

Mg(2+) is bound at residue aspartate 92. Residue cysteine 93 coordinates Zn(2+). Mg(2+) contacts are provided by aspartate 94 and aspartate 96. Zn(2+)-binding residues include cysteine 109 and cysteine 116.

It belongs to the PRA-CH family. Homodimer. Mg(2+) is required as a cofactor. It depends on Zn(2+) as a cofactor.

The protein resides in the cytoplasm. It carries out the reaction 1-(5-phospho-beta-D-ribosyl)-5'-AMP + H2O = 1-(5-phospho-beta-D-ribosyl)-5-[(5-phospho-beta-D-ribosylamino)methylideneamino]imidazole-4-carboxamide. It functions in the pathway amino-acid biosynthesis; L-histidine biosynthesis; L-histidine from 5-phospho-alpha-D-ribose 1-diphosphate: step 3/9. In terms of biological role, catalyzes the hydrolysis of the adenine ring of phosphoribosyl-AMP. The sequence is that of Phosphoribosyl-AMP cyclohydrolase from Alkalilimnicola ehrlichii (strain ATCC BAA-1101 / DSM 17681 / MLHE-1).